We begin with the raw amino-acid sequence, 141 residues long: Nucleoside triphosphatase NudI (141 aa).

The region spanning 1–141 (MRQRTIVCPI…RLTFTQKGLL (141 aa)) is the Nudix hydrolase domain. The Nudix box signature appears at 38-59 (GGMEPGETMEEALRREIREELG).

The protein belongs to the Nudix hydrolase family. NudI subfamily. As to quaternary structure, monomer. Mg(2+) is required as a cofactor.

The catalysed reaction is a ribonucleoside 5'-triphosphate + H2O = a ribonucleoside 5'-phosphate + diphosphate + H(+). It carries out the reaction a 2'-deoxyribonucleoside 5'-triphosphate + H2O = a 2'-deoxyribonucleoside 5'-phosphate + diphosphate + H(+). It catalyses the reaction dUTP + H2O = dUMP + diphosphate + H(+). The enzyme catalyses dTTP + H2O = dTMP + diphosphate + H(+). The catalysed reaction is dCTP + H2O = dCMP + diphosphate + H(+). Functionally, catalyzes the hydrolysis of nucleoside triphosphates, with a preference for pyrimidine deoxynucleoside triphosphates (dUTP, dTTP and dCTP). In Enterobacter sp. (strain 638), this protein is Nucleoside triphosphatase NudI.